The following is an 851-amino-acid chain: DNA mismatch repair protein MutS (851 aa).

602 to 609 serves as a coordination point for ATP; it reads GPNMSGKS.

This sequence belongs to the DNA mismatch repair MutS family.

This protein is involved in the repair of mismatches in DNA. It is possible that it carries out the mismatch recognition step. This protein has a weak ATPase activity. The chain is DNA mismatch repair protein MutS from Streptococcus pyogenes serotype M3 (strain SSI-1).